Here is a 173-residue protein sequence, read N- to C-terminus: Crossover junction endodeoxyribonuclease RuvC (173 aa).

Catalysis depends on residues D8, E67, and D139. The Mg(2+) site is built by D8, E67, and D139.

Belongs to the RuvC family. In terms of assembly, homodimer which binds Holliday junction (HJ) DNA. The HJ becomes 2-fold symmetrical on binding to RuvC with unstacked arms; it has a different conformation from HJ DNA in complex with RuvA. In the full resolvosome a probable DNA-RuvA(4)-RuvB(12)-RuvC(2) complex forms which resolves the HJ. Mg(2+) is required as a cofactor.

The protein localises to the cytoplasm. The enzyme catalyses Endonucleolytic cleavage at a junction such as a reciprocal single-stranded crossover between two homologous DNA duplexes (Holliday junction).. The RuvA-RuvB-RuvC complex processes Holliday junction (HJ) DNA during genetic recombination and DNA repair. Endonuclease that resolves HJ intermediates. Cleaves cruciform DNA by making single-stranded nicks across the HJ at symmetrical positions within the homologous arms, yielding a 5'-phosphate and a 3'-hydroxyl group; requires a central core of homology in the junction. The consensus cleavage sequence is 5'-(A/T)TT(C/G)-3'. Cleavage occurs on the 3'-side of the TT dinucleotide at the point of strand exchange. HJ branch migration catalyzed by RuvA-RuvB allows RuvC to scan DNA until it finds its consensus sequence, where it cleaves and resolves the cruciform DNA. The protein is Crossover junction endodeoxyribonuclease RuvC of Psychromonas ingrahamii (strain DSM 17664 / CCUG 51855 / 37).